The sequence spans 137 residues: Small ribosomal subunit protein uS11 (137 aa).

Disordered stretches follow at residues 1-31 (MPPKSRGTGPKKTQKARRRDKKNVPHGAAHI) and 117-137 (TISDVTPQPHNGCRPPKRRRV). Basic residues predominate over residues 12–21 (KTQKARRRDK).

It belongs to the universal ribosomal protein uS11 family. As to quaternary structure, part of the 30S ribosomal subunit. Interacts with proteins S7 and S18. Binds to IF-3.

Functionally, located on the platform of the 30S subunit, it bridges several disparate RNA helices of the 16S rRNA. Forms part of the Shine-Dalgarno cleft in the 70S ribosome. This is Small ribosomal subunit protein uS11 from Rhodococcus jostii (strain RHA1).